The sequence spans 185 residues: Peptidyl-tRNA hydrolase (185 aa).

Tyr14 contributes to the tRNA binding site. His19 serves as the catalytic Proton acceptor. TRNA contacts are provided by Tyr65, Asn67, and Asn113.

The protein belongs to the PTH family. In terms of assembly, monomer.

Its subcellular location is the cytoplasm. It catalyses the reaction an N-acyl-L-alpha-aminoacyl-tRNA + H2O = an N-acyl-L-amino acid + a tRNA + H(+). Its function is as follows. Hydrolyzes ribosome-free peptidyl-tRNAs (with 1 or more amino acids incorporated), which drop off the ribosome during protein synthesis, or as a result of ribosome stalling. In terms of biological role, catalyzes the release of premature peptidyl moieties from peptidyl-tRNA molecules trapped in stalled 50S ribosomal subunits, and thus maintains levels of free tRNAs and 50S ribosomes. This Rickettsia bellii (strain OSU 85-389) protein is Peptidyl-tRNA hydrolase.